Consider the following 528-residue polypeptide: Na(+)/H(+) antiporter NhaB (528 aa).

10 helical membrane-spanning segments follow: residues 25-47, 66-86, 97-117, 130-164, 241-261, 304-324, 351-371, 390-410, 448-468, and 476-496; these read IISF…GWLL, PGGL…SQVL, LLLV…LFVF, VSLL…FYSI, IRMS…CFLV, AFIG…VGLI, ALPF…IIDL, LVVF…VFVG, ATPN…APLI, and VWMA…AIQL.

Belongs to the NhaB Na(+)/H(+) (TC 2.A.34) antiporter family.

It is found in the cell inner membrane. It carries out the reaction 2 Na(+)(in) + 3 H(+)(out) = 2 Na(+)(out) + 3 H(+)(in). In terms of biological role, na(+)/H(+) antiporter that extrudes sodium in exchange for external protons. The protein is Na(+)/H(+) antiporter NhaB of Shewanella halifaxensis (strain HAW-EB4).